A 110-amino-acid polypeptide reads, in one-letter code: Acid stress chaperone HdeA (110 aa).

The first 21 residues, 1-21, serve as a signal peptide directing secretion; the sequence is MKKVLGVILGGLLLLPVVSNA. Cysteines 39 and 87 form a disulfide.

This sequence belongs to the HdeA family.

The protein resides in the periplasm. Its function is as follows. Required for optimal acid stress protection. Exhibits a chaperone-like activity only at low pH by suppressing non-specifically the aggregation of denaturated periplasmic proteins. This Escherichia coli O157:H7 protein is Acid stress chaperone HdeA.